Here is a 310-residue protein sequence, read N- to C-terminus: Vomeronasal type-1 receptor 90 (310 aa).

Residues 1-20 (MRRISTLYGVVDKQAIFFSE) lie on the Extracellular side of the membrane. A helical transmembrane segment spans residues 21 to 41 (VVIGISFNSILFLFHIFQFLL). Residues 42 to 46 (ERRLR) lie on the Cytoplasmic side of the membrane. The helical transmembrane segment at 47 to 67 (ITDLIISLLALIHLGMLTVMG) threads the bilayer. Over 68-93 (FRAVDIFASQNVWNDIKCKSLAHLHR) the chain is Extracellular. The cysteines at positions 85 and 172 are disulfide-linked. The helical transmembrane segment at 94–114 (LLRGLSLCATCLLSIFQAITL) threads the bilayer. Residues 115–135 (SPRSSCLAKFKYKSTQHSLCS) lie on the Cytoplasmic side of the membrane. Residues 136–156 (LLVLWAFYMSCGTHYSFTIVA) form a helical membrane-spanning segment. The Extracellular portion of the chain corresponds to 157–183 (DYNFSSRSLIFVTESCIILPMDYITRH). Asn-159 carries an N-linked (GlcNAc...) asparagine glycan. A helical membrane pass occupies residues 184 to 204 (LFFILGIFRDVSFIGLMALSS). Topologically, residues 205–238 (GYMVALLCRHRKQAQHLHRTSLSPKASPEQRATR) are cytoplasmic. The chain crosses the membrane as a helical span at residues 239 to 259 (TILLLMSFFVLMYCLDCTISA). Over 260–271 (SRLMHNGEPIHH) the chain is Extracellular. Residues 272–292 (SIQMMVSNSYATLSPLLLIVT) form a helical membrane-spanning segment. The Cytoplasmic segment spans residues 293–310 (ENRISRFLKSLLGRTVDA).

Belongs to the G-protein coupled receptor 1 family. As to expression, expressed in 1-4% of neurons of the vomeronasal organ. Only one pheromone receptor gene may be expressed in a particular neuron. Not expressed in the main olfactory epithelium.

Its subcellular location is the cell membrane. Its function is as follows. Putative pheromone receptor implicated in the regulation of social as well as reproductive behavior. This chain is Vomeronasal type-1 receptor 90 (Vom1r90), found in Rattus norvegicus (Rat).